A 387-amino-acid chain; its full sequence is Guanylate kinase 1 (387 aa).

Residues 137-319 (EKPIVISGPS…CYKKLKNLLG (183 aa)) enclose the Guanylate kinase-like domain. 144 to 151 (GPSGVGKG) is an ATP binding site. Catalysis depends on residues R177, R270, and R281. Residues N304 and D305 each coordinate ATP.

It belongs to the guanylate kinase family. As to quaternary structure, monomer.

The enzyme catalyses GMP + ATP = GDP + ADP. Essential for recycling GMP and indirectly, cGMP. Required for normal development of the gametophyte and embryo, in association with GK2. This Arabidopsis thaliana (Mouse-ear cress) protein is Guanylate kinase 1 (GK-1).